Consider the following 351-residue polypeptide: Uroporphyrinogen decarboxylase (351 aa).

Substrate contacts are provided by residues 26–30, aspartate 76, tyrosine 153, serine 208, and histidine 323; that span reads RQAGR.

This sequence belongs to the uroporphyrinogen decarboxylase family. As to quaternary structure, homodimer.

The protein localises to the cytoplasm. It carries out the reaction uroporphyrinogen III + 4 H(+) = coproporphyrinogen III + 4 CO2. It functions in the pathway porphyrin-containing compound metabolism; protoporphyrin-IX biosynthesis; coproporphyrinogen-III from 5-aminolevulinate: step 4/4. Functionally, catalyzes the decarboxylation of four acetate groups of uroporphyrinogen-III to yield coproporphyrinogen-III. In Prochlorococcus marinus (strain MIT 9211), this protein is Uroporphyrinogen decarboxylase.